The following is a 240-amino-acid chain: 2,3,4,5-tetrahydropyridine-2,6-dicarboxylate N-acetyltransferase (240 aa).

This sequence belongs to the transferase hexapeptide repeat family. DapH subfamily.

It catalyses the reaction (S)-2,3,4,5-tetrahydrodipicolinate + acetyl-CoA + H2O = L-2-acetamido-6-oxoheptanedioate + CoA. It participates in amino-acid biosynthesis; L-lysine biosynthesis via DAP pathway; LL-2,6-diaminopimelate from (S)-tetrahydrodipicolinate (acetylase route): step 1/3. Catalyzes the transfer of an acetyl group from acetyl-CoA to tetrahydrodipicolinate. The chain is 2,3,4,5-tetrahydropyridine-2,6-dicarboxylate N-acetyltransferase from Staphylococcus epidermidis (strain ATCC 35984 / DSM 28319 / BCRC 17069 / CCUG 31568 / BM 3577 / RP62A).